The sequence spans 73 residues: Large ribosomal subunit protein bL28 (73 aa).

This sequence belongs to the bacterial ribosomal protein bL28 family.

The chain is Large ribosomal subunit protein bL28 from Anaeromyxobacter dehalogenans (strain 2CP-1 / ATCC BAA-258).